A 490-amino-acid chain; its full sequence is Cardiolipin synthase A (490 aa).

2 consecutive transmembrane segments (helical) span residues Y4–V24 and A39–L59. PLD phosphodiesterase domains lie at M220–Y247 and K403–S430. Residues H225, K227, D232, H408, K410, and D415 contribute to the active site.

Belongs to the phospholipase D family. Cardiolipin synthase subfamily. ClsA sub-subfamily.

It is found in the cell membrane. The catalysed reaction is 2 a 1,2-diacyl-sn-glycero-3-phospho-(1'-sn-glycerol) = a cardiolipin + glycerol. Functionally, catalyzes the reversible phosphatidyl group transfer from one phosphatidylglycerol molecule to another to form cardiolipin (CL) (diphosphatidylglycerol) and glycerol. The chain is Cardiolipin synthase A from Buchnera aphidicola subsp. Baizongia pistaciae (strain Bp).